We begin with the raw amino-acid sequence, 453 residues long: Alpha-galacturonidase (453 aa).

11 to 72 (IKIAYIGGGS…SQWEYKSVDS (62 aa)) is an NAD(+) binding site. Asn151 contributes to the substrate binding site. Cys173 contributes to the Mn(2+) binding site. His174 serves as the catalytic Proton donor. Residue His209 participates in Mn(2+) binding.

It belongs to the glycosyl hydrolase 4 family. In terms of assembly, homotetramer. The cofactor is NAD(+). Mn(2+) is required as a cofactor.

It catalyses the reaction [(1-&gt;4)-alpha-D-galacturonosyl](n) + H2O = alpha-D-galacturonate + [(1-&gt;4)-alpha-D-galacturonosyl](n-1). Functionally, alpha-galacturonidase able to catalyze the hydrolysis of the chromogenic substrate p-nitrophenyl-alpha-D-galacturonic acid (pNPalphaGalUA). It is probable that alpha-1,4-di-galacturonate (GalUA(2)) is the naturally occurring substrate. The protein is Alpha-galacturonidase of Thermoanaerobacter italicus (strain DSM 9252 / Ab9).